Reading from the N-terminus, the 666-residue chain is uncharacterized protein (666 aa).

The protein belongs to the MG032/MG096/MG288 family.

This is an uncharacterized protein from Mycoplasma genitalium (strain ATCC 33530 / DSM 19775 / NCTC 10195 / G37) (Mycoplasmoides genitalium).